The following is a 1373-amino-acid chain: DNA-directed RNA polymerase subunit beta (1373 aa).

It belongs to the RNA polymerase beta chain family. In terms of assembly, the RNAP catalytic core consists of 2 alpha, 1 beta, 1 beta' and 1 omega subunit. When a sigma factor is associated with the core the holoenzyme is formed, which can initiate transcription.

It catalyses the reaction RNA(n) + a ribonucleoside 5'-triphosphate = RNA(n+1) + diphosphate. DNA-dependent RNA polymerase catalyzes the transcription of DNA into RNA using the four ribonucleoside triphosphates as substrates. The sequence is that of DNA-directed RNA polymerase subunit beta from Lawsonia intracellularis (strain PHE/MN1-00).